The primary structure comprises 101 residues: Chaperone modulatory protein CbpM (101 aa).

The protein belongs to the CbpM family.

In terms of biological role, interacts with CbpA and inhibits both the DnaJ-like co-chaperone activity and the DNA binding activity of CbpA. Together with CbpA, modulates the activity of the DnaK chaperone system. Does not inhibit the co-chaperone activity of DnaJ. In Escherichia coli (strain K12 / MC4100 / BW2952), this protein is Chaperone modulatory protein CbpM.